Reading from the N-terminus, the 370-residue chain is Peptide chain release factor 1 (370 aa).

Glutamine 237 is subject to N5-methylglutamine. The span at 286–296 (ERQRSARDATR) shows a compositional bias: basic and acidic residues. The segment at 286 to 310 (ERQRSARDATRKSQVGTGDRSEKIR) is disordered.

Belongs to the prokaryotic/mitochondrial release factor family. Methylated by PrmC. Methylation increases the termination efficiency of RF1.

It localises to the cytoplasm. Functionally, peptide chain release factor 1 directs the termination of translation in response to the peptide chain termination codons UAG and UAA. This chain is Peptide chain release factor 1, found in Anaeromyxobacter dehalogenans (strain 2CP-C).